Consider the following 283-residue polypeptide: Pantothenate synthetase (283 aa).

30 to 37 (MGNLHAGH) serves as a coordination point for ATP. Residue His37 is the Proton donor of the active site. Gln61 provides a ligand contact to (R)-pantoate. Gln61 lines the beta-alanine pocket. 149 to 152 (GEKD) is an ATP binding site. Residue Gln155 coordinates (R)-pantoate. ATP is bound by residues Val178 and 186-189 (LSSR).

It belongs to the pantothenate synthetase family. In terms of assembly, homodimer.

It is found in the cytoplasm. It carries out the reaction (R)-pantoate + beta-alanine + ATP = (R)-pantothenate + AMP + diphosphate + H(+). The protein operates within cofactor biosynthesis; (R)-pantothenate biosynthesis; (R)-pantothenate from (R)-pantoate and beta-alanine: step 1/1. In terms of biological role, catalyzes the condensation of pantoate with beta-alanine in an ATP-dependent reaction via a pantoyl-adenylate intermediate. This is Pantothenate synthetase from Pseudomonas paraeruginosa (strain DSM 24068 / PA7) (Pseudomonas aeruginosa (strain PA7)).